A 150-amino-acid chain; its full sequence is Large ribosomal subunit protein uL15 (150 aa).

The disordered stretch occupies residues 1 to 58 (MNLSGIKPPKGQVKTKKRIGRGMGSGHGKTATRGSKGQHAGTGFSQKRGFEGGQMPLH).

Belongs to the universal ribosomal protein uL15 family. In terms of assembly, part of the 50S ribosomal subunit.

Functionally, binds to the 23S rRNA. The chain is Large ribosomal subunit protein uL15 from Solibacter usitatus (strain Ellin6076).